Consider the following 317-residue polypeptide: Aspartate carbamoyltransferase catalytic subunit (317 aa).

Carbamoyl phosphate-binding residues include R66 and T67. L-aspartate is bound at residue K94. Residues R116, H144, and Q147 each coordinate carbamoyl phosphate. L-aspartate-binding residues include R177 and R231. The carbamoyl phosphate site is built by G272 and P273.

It belongs to the aspartate/ornithine carbamoyltransferase superfamily. ATCase family. In terms of assembly, heterododecamer (2C3:3R2) of six catalytic PyrB chains organized as two trimers (C3), and six regulatory PyrI chains organized as three dimers (R2).

It carries out the reaction carbamoyl phosphate + L-aspartate = N-carbamoyl-L-aspartate + phosphate + H(+). The protein operates within pyrimidine metabolism; UMP biosynthesis via de novo pathway; (S)-dihydroorotate from bicarbonate: step 2/3. Catalyzes the condensation of carbamoyl phosphate and aspartate to form carbamoyl aspartate and inorganic phosphate, the committed step in the de novo pyrimidine nucleotide biosynthesis pathway. This Nitrobacter hamburgensis (strain DSM 10229 / NCIMB 13809 / X14) protein is Aspartate carbamoyltransferase catalytic subunit.